The primary structure comprises 79 residues: VQKRTIIMEKKMAGFCIFFLILFLAQEYGVEGKECLNLSDKFKGPCLGSKNCDHHCRDIEHLLSGVCRDDFRCWCNRKC.

An N-terminal signal peptide occupies residues 1-32 (VQKRTIIMEKKMAGFCIFFLILFLAQEYGVEG). 3 cysteine pairs are disulfide-bonded: C35/C79, C46/C67, and C52/C73.

This sequence belongs to the DEFL family. May form dimers. In terms of processing, not glycosylated. Post-translationally, has 4 disulfide bonds.

Its function is as follows. Probably has antifungal activity. This is Defensin 2 from Arachis hypogaea (Peanut).